Here is a 132-residue protein sequence, read N- to C-terminus: Small ribosomal subunit protein uS8 (132 aa).

It belongs to the universal ribosomal protein uS8 family. In terms of assembly, part of the 30S ribosomal subunit. Contacts proteins S5 and S12.

Functionally, one of the primary rRNA binding proteins, it binds directly to 16S rRNA central domain where it helps coordinate assembly of the platform of the 30S subunit. The chain is Small ribosomal subunit protein uS8 from Rhizobium etli (strain CIAT 652).